Here is a 284-residue protein sequence, read N- to C-terminus: GTP cyclohydrolase MptA (284 aa).

This sequence belongs to the GTP cyclohydrolase IV family. As to quaternary structure, homodimer. Fe(2+) is required as a cofactor.

It carries out the reaction GTP + H2O = 7,8-dihydroneopterin 2',3'-cyclic phosphate + formate + diphosphate + H(+). It functions in the pathway cofactor biosynthesis; 5,6,7,8-tetrahydromethanopterin biosynthesis. Functionally, converts GTP to 7,8-dihydro-D-neopterin 2',3'-cyclic phosphate, the first intermediate in the biosynthesis of coenzyme methanopterin. This is GTP cyclohydrolase MptA from Thermoplasma volcanium (strain ATCC 51530 / DSM 4299 / JCM 9571 / NBRC 15438 / GSS1).